The chain runs to 83 residues: Cytochrome c oxidase subunit 7A2, mitochondrial (83 aa).

The transit peptide at 1 to 23 (MLRNLLALRQIGQRTISTASRRH) directs the protein to the mitochondrion. Topologically, residues 24 to 48 (FKNKVPEKQKLFQEDDEIPLYLKGG) are mitochondrial matrix. An N6-acetyllysine modification is found at lysine 33. Residues 49 to 77 (VADALLYRATMILTVGGTAYAIYELAVAS) form a helical membrane-spanning segment. Over 78-83 (FPKKQE) the chain is Mitochondrial intermembrane.

This sequence belongs to the cytochrome c oxidase VIIa family. In terms of assembly, component of the cytochrome c oxidase (complex IV, CIV), a multisubunit enzyme composed of 14 subunits. The complex is composed of a catalytic core of 3 subunits MT-CO1, MT-CO2 and MT-CO3, encoded in the mitochondrial DNA, and 11 supernumerary subunits COX4I1 (or COX4I2), COX5A, COX5B, COX6A1 (or COX6A2), COX6B1 (or COX6B2), COX6C, COX7A2 (or COX7A1), COX7B, COX7C, COX8A and NDUFA4, which are encoded in the nuclear genome. The complex exists as a monomer or a dimer and forms supercomplexes (SCs) in the inner mitochondrial membrane with NADH-ubiquinone oxidoreductase (complex I, CI) and ubiquinol-cytochrome c oxidoreductase (cytochrome b-c1 complex, complex III, CIII), resulting in different assemblies (supercomplex SCI(1)III(2)IV(1) and megacomplex MCI(2)III(2)IV(2)). Interacts with PET100.

Its subcellular location is the mitochondrion inner membrane. Its pathway is energy metabolism; oxidative phosphorylation. In terms of biological role, component of the cytochrome c oxidase, the last enzyme in the mitochondrial electron transport chain which drives oxidative phosphorylation. The respiratory chain contains 3 multisubunit complexes succinate dehydrogenase (complex II, CII), ubiquinol-cytochrome c oxidoreductase (cytochrome b-c1 complex, complex III, CIII) and cytochrome c oxidase (complex IV, CIV), that cooperate to transfer electrons derived from NADH and succinate to molecular oxygen, creating an electrochemical gradient over the inner membrane that drives transmembrane transport and the ATP synthase. Cytochrome c oxidase is the component of the respiratory chain that catalyzes the reduction of oxygen to water. Electrons originating from reduced cytochrome c in the intermembrane space (IMS) are transferred via the dinuclear copper A center (CU(A)) of subunit 2 and heme A of subunit 1 to the active site in subunit 1, a binuclear center (BNC) formed by heme A3 and copper B (CU(B)). The BNC reduces molecular oxygen to 2 water molecules using 4 electrons from cytochrome c in the IMS and 4 protons from the mitochondrial matrix. The protein is Cytochrome c oxidase subunit 7A2, mitochondrial (COX7A2) of Homo sapiens (Human).